The sequence spans 338 residues: 1-aminocyclopropane-1-carboxylate deaminase (338 aa).

Lys-51 carries the post-translational modification N6-(pyridoxal phosphate)lysine. Catalysis depends on Ser-78, which acts as the Nucleophile.

This sequence belongs to the ACC deaminase/D-cysteine desulfhydrase family. Homotrimer. The cofactor is pyridoxal 5'-phosphate.

The catalysed reaction is 1-aminocyclopropane-1-carboxylate + H2O = 2-oxobutanoate + NH4(+). Catalyzes a cyclopropane ring-opening reaction, the irreversible conversion of 1-aminocyclopropane-1-carboxylate (ACC) to ammonia and alpha-ketobutyrate. Allows growth on ACC as a nitrogen source. The protein is 1-aminocyclopropane-1-carboxylate deaminase of Burkholderia pseudomallei (strain 1106a).